The chain runs to 430 residues: Rho GTPase-activating protein 2 (430 aa).

Positions 1-36 are disordered; sequence MTGLVMMTKGGGCGGGGKGGRRKSTAEEEEEEEQNQ. The segment covering 9–18 has biased composition (gly residues); sequence KGGGCGGGGK. Positions 80–93 constitute a CRIB domain; sequence IGWPTNVRHITHVT. Residues 125–310 form the Rho-GAP domain; it reads VSAESMQCSY…TLAEREENAT (186 aa). Residues 307–372 form a disordered region; it reads ENATGSEGYS…HLSRHSTHED (66 aa). Positions 316-326 are enriched in low complexity; it reads SPSHSSNSQTD. Over residues 347-356 the composition is skewed to acidic residues; it reads ECGEEEEVEE. Basic and acidic residues predominate over residues 357–371; the sequence is VEQHQEHLSRHSTHE.

Homodimerizes via its Rho-GAP domain and forms a tetrameric complex (2:2) with ARAC1/ROP3, ARAC2/ROP7, ARAC4/ROP2, ARAC5/ROP4, ARAC7/ROP9 or ARAC11/ROP1.

In terms of biological role, acts as a GTPase activator for the Rac-type GTPase by converting it to an inactive GDP-bound state. This is Rho GTPase-activating protein 2 (ROPGAP2) from Arabidopsis thaliana (Mouse-ear cress).